The chain runs to 565 residues: Periplasmic trehalase (565 aa).

Residues 1–30 (MKSPAPSRPQKMALIPACIFLCFAALSVQA) form the signal peptide. Substrate contacts are provided by residues R152, 159–160 (WD), N196, 205–207 (RSQ), 277–279 (RPE), and G310. Active-site proton donor/acceptor residues include D312 and E496. E511 contacts substrate. The disordered stretch occupies residues 538 to 565 (PCDNVPATRPTVKSATTQPSTKEAQPTP). Residues 548 to 565 (TVKSATTQPSTKEAQPTP) are compositionally biased toward polar residues.

The protein belongs to the glycosyl hydrolase 37 family. As to quaternary structure, monomer.

Its subcellular location is the periplasm. The catalysed reaction is alpha,alpha-trehalose + H2O = alpha-D-glucose + beta-D-glucose. Its function is as follows. Provides the cells with the ability to utilize trehalose at high osmolarity by splitting it into glucose molecules that can subsequently be taken up by the phosphotransferase-mediated uptake system. This is Periplasmic trehalase from Escherichia coli O8 (strain IAI1).